The sequence spans 300 residues: NADH-ubiquinone oxidoreductase chain 2 (300 aa).

The next 9 helical transmembrane spans lie at 4-24 (FFCI…NVLV), 29-49 (FLLM…YVGI), 58-78 (SLGL…IVMM), 87-107 (FWVF…FLTF), 122-142 (FSAF…LFVL), 165-185 (FLSV…MAFL), 201-221 (VLLV…IFVL), 231-251 (FLLF…LWLV), and 267-287 (VLFF…FSKI).

It belongs to the complex I subunit 2 family.

Its subcellular location is the mitochondrion inner membrane. It catalyses the reaction a ubiquinone + NADH + 5 H(+)(in) = a ubiquinol + NAD(+) + 4 H(+)(out). In terms of biological role, core subunit of the mitochondrial membrane respiratory chain NADH dehydrogenase (Complex I) that is believed to belong to the minimal assembly required for catalysis. Complex I functions in the transfer of electrons from NADH to the respiratory chain. The immediate electron acceptor for the enzyme is believed to be ubiquinone. In Ascaris suum (Pig roundworm), this protein is NADH-ubiquinone oxidoreductase chain 2 (ND2).